The chain runs to 633 residues: ATP-dependent zinc metalloprotease FtsH (633 aa).

At 1–19 (MTPSNEPGKQDQIPQPGPT) the chain is on the cytoplasmic side. The chain crosses the membrane as a helical span at residues 20–40 (IPNQYSFLWLSAAIFLMFLWL). The Periplasmic segment spans residues 41–133 (QGNNQQQQQE…SRSGRPWWQE (93 aa)). A helical membrane pass occupies residues 134–154 (LILGFLPWILLLALMFWFWGA). At 155–633 (AQKRMTQGGG…LEEARSRETA (479 aa)) the chain is on the cytoplasmic side. 226-233 (GPPGTGKT) is a binding site for ATP. A Zn(2+)-binding site is contributed by His-447. Glu-448 is an active-site residue. Zn(2+) is bound by residues His-451 and Asp-523.

It in the central section; belongs to the AAA ATPase family. The protein in the C-terminal section; belongs to the peptidase M41 family. In terms of assembly, homohexamer. Requires Zn(2+) as cofactor.

The protein resides in the cell inner membrane. Acts as a processive, ATP-dependent zinc metallopeptidase for both cytoplasmic and membrane proteins. Plays a role in the quality control of integral membrane proteins. The protein is ATP-dependent zinc metalloprotease FtsH of Marinobacter nauticus (strain ATCC 700491 / DSM 11845 / VT8) (Marinobacter aquaeolei).